Reading from the N-terminus, the 286-residue chain is Alpha-ketoglutarate-dependent dioxygenase alkB homolog 3 (286 aa).

A disordered region spans residues 1-46 (MEDKRQRARVQGGWATPTKSQSATQPASPARSRLSQTAGPAWRSKE). The segment covering 17-38 (PTKSQSATQPASPARSRLSQTA) has biased composition (polar residues). Substrate-binding positions include tryptophan 115 and 141–143 (YTY). Residues 172-278 (TFNSLLCNFY…RVNLTFRTVY (107 aa)) enclose the Fe2OG dioxygenase domain. At leucine 177 the chain carries (4R)-5-hydroxyleucine; alternate. Leucine 177 carries the (4R)-5-oxoleucine; alternate modification. 179-181 (NFY) provides a ligand contact to 2-oxoglutarate. Fe cation is bound by residues histidine 191 and aspartate 193. Substrate is bound at residue aspartate 194. Residue histidine 257 participates in Fe cation binding. 2-oxoglutarate is bound by residues 269-275 (RVNLTFR) and arginine 275.

This sequence belongs to the alkB family. Interacts with the ASCC complex composed of ASCC1, ASCC2 and ASCC3. Interacts directly with ASCC3, and is thereby recruited to the ASCC complex. Interacts with OTUD4; the interaction is direct. Interacts with USP7 and USP9X. The cofactor is Fe(2+). Ubiquitinated; undergoes 'Lys-48'-linked polyubiquitination. OTUD4 promotes USP7 and USP9X-dependent deubiquitination of 'Lys-48'-polyubiquitinated ALKBH3 promoting the repair of alkylated DNA lesions. Detected in testis, kidney, liver and heart.

It localises to the nucleus. The protein resides in the cytoplasm. The enzyme catalyses an N(1)-methyladenosine in mRNA + 2-oxoglutarate + O2 = an adenosine in mRNA + formaldehyde + succinate + CO2. The catalysed reaction is a methylated nucleobase within DNA + 2-oxoglutarate + O2 = a nucleobase within DNA + formaldehyde + succinate + CO2. It carries out the reaction an N(1)-methyl-2'-deoxyadenosine in single-stranded DNA + 2-oxoglutarate + O2 = a 2'-deoxyadenosine in single-stranded DNA + formaldehyde + succinate + CO2 + H(+). It catalyses the reaction an N(3)-methyl-2'-deoxycytidine in single-stranded DNA + 2-oxoglutarate + O2 = a 2'-deoxycytidine in single-stranded DNA + formaldehyde + succinate + CO2 + H(+). The enzyme catalyses a 3,N(4)-etheno-2'-deoxycytidine in single-stranded DNA + 2-oxoglutarate + O2 + H2O = a 2'-deoxycytidine in single-stranded DNA + glyoxal + succinate + CO2. Its activity is regulated as follows. Activated by ascorbate. In terms of biological role, dioxygenase that mediates demethylation of DNA and RNA containing 1-methyladenosine (m1A). Repairs alkylated DNA containing 1-methyladenosine (m1A) and 3-methylcytosine (m3C) by oxidative demethylation. Has a strong preference for single-stranded DNA. Able to process alkylated m3C within double-stranded regions via its interaction with ASCC3, which promotes DNA unwinding to generate single-stranded substrate needed for ALKBH3. Can repair exocyclic 3,N4-ethenocytosine adducs in single-stranded DNA. Also acts on RNA. Demethylates N(1)-methyladenosine (m1A) RNA, an epigenetic internal modification of messenger RNAs (mRNAs) highly enriched within 5'-untranslated regions (UTRs) and in the vicinity of start codons. Requires molecular oxygen, alpha-ketoglutarate and iron. The polypeptide is Alpha-ketoglutarate-dependent dioxygenase alkB homolog 3 (Mus musculus (Mouse)).